A 376-amino-acid polypeptide reads, in one-letter code: N-acetyldiaminopimelate deacetylase (376 aa).

Asp-70 is a catalytic residue. Catalysis depends on Glu-129, which acts as the Proton acceptor.

It belongs to the peptidase M20A family. N-acetyldiaminopimelate deacetylase subfamily.

It catalyses the reaction N-acetyl-(2S,6S)-2,6-diaminopimelate + H2O = (2S,6S)-2,6-diaminopimelate + acetate. The protein operates within amino-acid biosynthesis; L-lysine biosynthesis via DAP pathway; LL-2,6-diaminopimelate from (S)-tetrahydrodipicolinate (acetylase route): step 3/3. In terms of biological role, catalyzes the conversion of N-acetyl-diaminopimelate to diaminopimelate and acetate. This is N-acetyldiaminopimelate deacetylase from Bacillus pumilus (strain SAFR-032).